Here is a 234-residue protein sequence, read N- to C-terminus: Small ribosomal subunit protein uS3 (234 aa).

Residues 39-107 (IRKMLKERLK…EVHLNLVEVR (69 aa)) enclose the KH type-2 domain. Residues 215 to 227 (QERRLQESGEQRA) are compositionally biased toward basic and acidic residues. The segment at 215–234 (QERRLQESGEQRARSGRQAA) is disordered.

This sequence belongs to the universal ribosomal protein uS3 family. As to quaternary structure, part of the 30S ribosomal subunit. Forms a tight complex with proteins S10 and S14.

Functionally, binds the lower part of the 30S subunit head. Binds mRNA in the 70S ribosome, positioning it for translation. In Maricaulis maris (strain MCS10) (Caulobacter maris), this protein is Small ribosomal subunit protein uS3.